A 473-amino-acid polypeptide reads, in one-letter code: H(+)/Cl(-) exchange transporter ClcA (473 aa).

The Cytoplasmic segment spans residues 1 to 32 (MKTDTPSLETPQAARLRRRQLIRQLLERDKTP). Residues 33–69 (LAILFMAAVVGTLVGLAAVAFDKGVAWLQNQRMGALV) traverse the membrane as a helical segment. Residues 70-76 (HTADNYP) are Periplasmic-facing. Residues 77-100 (LLLTVAFLCSAVLAMFGYFLVRKY) form a helical membrane-spanning segment. A Selectivity filter part_1 motif is present at residues 106–110 (GSGIP). Residue S107 coordinates chloride. The helical intramembrane region spans 109–116 (IPEIEGAL). The Cytoplasmic segment spans residues 117-123 (EDQRPVR). Transmembrane regions (helical) follow at residues 124-141 (WWRV…TLGG) and 148-166 (EGPT…LDVF). A Selectivity filter part_2 motif is present at residues 146–150 (GREGP). Over 167–176 (RLKGDEARHT) the chain is Cytoplasmic. 2 intramembrane regions (helical) span residues 177-189 (LLAT…LAAA) and 193-201 (PLAGILFII). Topologically, residues 202–214 (EEMRPQFRYTLIS) are cytoplasmic. A helical transmembrane segment spans residues 215–232 (IKAVFIGVIMSTIMYRIF). The Periplasmic portion of the chain corresponds to 233-252 (NHEVALIDVGKLSDAPLNTL). The helical transmembrane segment at 253–281 (WLYLILGIIFGIFGPIFNKWVLGMQDLLH) threads the bilayer. Over 282-287 (RVHGGN) the chain is Cytoplasmic. Residues 288 to 309 (ITKWVLMGGAIGGLCGLLGFVA) traverse the membrane as a helical segment. Over 310–329 (PATSGGGFNLIPIATAGNFS) the chain is Periplasmic. A run of 2 helical transmembrane segments spans residues 330 to 349 (MGML…LCFS) and 355 to 376 (GIFA…MVAV). Residues 355 to 359 (GIFAP) carry the Selectivity filter part_3 motif. Chloride-binding residues include I356 and F357. The Periplasmic segment spans residues 377–386 (ELFPQYHLEA). An intramembrane region (helical) is located at residues 387–401 (GTFAIAGMGALLAAS). Residues 402 to 404 (IRA) constitute an intramembrane region (note=Loop between two helices). An intramembrane region (helical) is located at residues 405 to 416 (PLTGIILVLEMT). The note=Loop between two helices intramembrane region spans 417-421 (DNYQL). The helical transmembrane segment at 422 to 438 (ILPMIITGLGATLLAQF) threads the bilayer. The Cytoplasmic segment spans residues 439–473 (TGGKPLYSAILARTLAKQEAEQLARSKAASASENT). Y445 lines the chloride pocket.

It belongs to the chloride channel (TC 2.A.49) family. ClcA subfamily. In terms of assembly, homodimer.

The protein localises to the cell inner membrane. It carries out the reaction 2 chloride(in) + H(+)(out) = 2 chloride(out) + H(+)(in). Functionally, proton-coupled chloride transporter. Functions as antiport system and exchanges two chloride ions for 1 proton. Probably acts as an electrical shunt for an outwardly-directed proton pump that is linked to amino acid decarboxylation, as part of the extreme acid resistance (XAR) response. In Escherichia coli O157:H7, this protein is H(+)/Cl(-) exchange transporter ClcA.